The primary structure comprises 122 residues: Large ribosomal subunit protein uL18 (122 aa).

It belongs to the universal ribosomal protein uL18 family. Part of the 50S ribosomal subunit; part of the 5S rRNA/L5/L18/L25 subcomplex. Contacts the 5S and 23S rRNAs.

Functionally, this is one of the proteins that bind and probably mediate the attachment of the 5S RNA into the large ribosomal subunit, where it forms part of the central protuberance. This Fervidobacterium nodosum (strain ATCC 35602 / DSM 5306 / Rt17-B1) protein is Large ribosomal subunit protein uL18.